The following is a 404-amino-acid chain: Argininosuccinate synthase (404 aa).

Residues 10–18 (AFSGGLDTS) and A37 each bind ATP. Residues Y88 and S93 each contribute to the L-citrulline site. G118 is an ATP binding site. L-aspartate-binding residues include T120, N124, and D125. Residue N124 coordinates L-citrulline. The L-citrulline site is built by R128, S179, S188, E264, and Y276.

It belongs to the argininosuccinate synthase family. Type 1 subfamily. In terms of assembly, homotetramer.

It is found in the cytoplasm. The enzyme catalyses L-citrulline + L-aspartate + ATP = 2-(N(omega)-L-arginino)succinate + AMP + diphosphate + H(+). The protein operates within amino-acid biosynthesis; L-arginine biosynthesis; L-arginine from L-ornithine and carbamoyl phosphate: step 2/3. The protein is Argininosuccinate synthase of Nitrosomonas eutropha (strain DSM 101675 / C91 / Nm57).